Reading from the N-terminus, the 36-residue chain is Mu/kappa-theraphotoxin-Ap1a (36 aa).

3 disulfides stabilise this stretch: cysteine 3/cysteine 18, cysteine 10/cysteine 23, and cysteine 17/cysteine 30. Phenylalanine 36 is modified (phenylalanine amide).

Belongs to the neurotoxin 10 (Hwtx-1) family. Expressed by the venom gland.

Its subcellular location is the secreted. In terms of biological role, inhibitor of voltage-gated potassium and sodium channels. Among other potassium channels, it selectively inhibits Kv10.1/KCNH1/EAG1 (IC(50)=236 nM) by shifting the voltage dependence of channel activation in a depolarising direction, it shows a maximum inhibition of 80% at saturating concentrations, it shows fast on-rates, and is poorly reversible. It also slightly affects channel inactivation, when the membrane is highly depolarised (&gt;+80 mV). It shows similar potency on Nav1.7/SCN9A (IC(50)=222 nM) and lower potency on Nav1.2/SCN2A (IC(50)=519 nM). The chain is Mu/kappa-theraphotoxin-Ap1a from Avicularia purpurea (Ecuadorian purple pinktoe tarantula).